The following is a 216-amino-acid chain: Mite allergen Lep d 7 (216 aa).

The first 19 residues, 1–19, serve as a signal peptide directing secretion; that stretch reads MQYLAIAVIVALAGLSAAA.

It belongs to the mite group 7 allergen family.

It is found in the secreted. The polypeptide is Mite allergen Lep d 7 (Lepidoglyphus destructor (Storage mite)).